The primary structure comprises 259 residues: Probable dihydroorotate dehydrogenase B (NAD(+)), electron transfer subunit (259 aa).

In terms of domain architecture, FAD-binding FR-type spans 1 to 89 (MLPLNATIVQ…RGPFGKGFSL (89 aa)). 4 residues coordinate [2Fe-2S] cluster: Cys-211, Cys-216, Cys-219, and Cys-229.

This sequence belongs to the PyrK family. As to quaternary structure, heterotetramer of 2 PyrK and 2 PyrD type B subunits. [2Fe-2S] cluster serves as cofactor. FAD is required as a cofactor.

The protein operates within pyrimidine metabolism; UMP biosynthesis via de novo pathway; orotate from (S)-dihydroorotate (NAD(+) route): step 1/1. In terms of biological role, responsible for channeling the electrons from the oxidation of dihydroorotate from the FMN redox center in the PyrD type B subunit to the ultimate electron acceptor NAD(+). The sequence is that of Probable dihydroorotate dehydrogenase B (NAD(+)), electron transfer subunit from Methanosarcina barkeri (strain Fusaro / DSM 804).